A 21-amino-acid polypeptide reads, in one-letter code: Fibrinogen beta chain (21 aa).

Gln1 is modified (pyrrolidone carboxylic acid). Tyr6 is subject to Sulfotyrosine.

In terms of assembly, heterohexamer; disulfide linked. Contains 2 sets of 3 non-identical chains (alpha, beta and gamma). The 2 heterotrimers are in head to head conformation with the N-termini in a small central domain. Conversion of fibrinogen to fibrin is triggered by thrombin, which cleaves fibrinopeptides A and B from alpha and beta chains, and thus exposes the N-terminal polymerization sites responsible for the formation of the soft clot.

The protein localises to the secreted. Functionally, cleaved by the protease thrombin to yield monomers which, together with fibrinogen alpha (FGA) and fibrinogen gamma (FGG), polymerize to form an insoluble fibrin matrix. Fibrin has a major function in hemostasis as one of the primary components of blood clots. In addition, functions during the early stages of wound repair to stabilize the lesion and guide cell migration during re-epithelialization. Was originally thought to be essential for platelet aggregation, based on in vitro studies using anticoagulated blood. However subsequent studies have shown that it is not absolutely required for thrombus formation in vivo. Enhances expression of SELP in activated platelets. Maternal fibrinogen is essential for successful pregnancy. Fibrin deposition is also associated with infection, where it protects against IFNG-mediated hemorrhage. May also facilitate the antibacterial immune response via both innate and T-cell mediated pathways. In Rangifer tarandus (Reindeer), this protein is Fibrinogen beta chain (FGB).